A 161-amino-acid chain; its full sequence is UPF0262 protein Rru_A2770 (161 aa).

Belongs to the UPF0262 family.

The chain is UPF0262 protein Rru_A2770 from Rhodospirillum rubrum (strain ATCC 11170 / ATH 1.1.1 / DSM 467 / LMG 4362 / NCIMB 8255 / S1).